The primary structure comprises 112 residues: UPF0342 protein SGO_1370 (112 aa).

Belongs to the UPF0342 family.

The sequence is that of UPF0342 protein SGO_1370 from Streptococcus gordonii (strain Challis / ATCC 35105 / BCRC 15272 / CH1 / DL1 / V288).